The chain runs to 156 residues: Protein-export protein SecB (156 aa).

The protein belongs to the SecB family. Homotetramer, a dimer of dimers. One homotetramer interacts with 1 SecA dimer.

The protein resides in the cytoplasm. Its function is as follows. One of the proteins required for the normal export of preproteins out of the cell cytoplasm. It is a molecular chaperone that binds to a subset of precursor proteins, maintaining them in a translocation-competent state. It also specifically binds to its receptor SecA. The sequence is that of Protein-export protein SecB from Xanthobacter autotrophicus (strain ATCC BAA-1158 / Py2).